Consider the following 125-residue polypeptide: Fluoride-specific ion channel FluC (125 aa).

4 helical membrane-spanning segments follow: residues 9–29 (LFCAGGGLTRYYLSGWIYGLL), 32–52 (AFPYGTLVVNIIGAYCIGLIM), 67–87 (IGLTVGFMGGLTTFSTFSYET), and 99–119 (AFTNVLASVAVCLLCTWLGII). Na(+)-binding residues include Gly75 and Thr78.

Belongs to the fluoride channel Fluc/FEX (TC 1.A.43) family.

The protein resides in the cell inner membrane. It catalyses the reaction fluoride(in) = fluoride(out). Na(+) is not transported, but it plays an essential structural role and its presence is essential for fluoride channel function. In terms of biological role, fluoride-specific ion channel. Important for reducing fluoride concentration in the cell, thus reducing its toxicity. The protein is Fluoride-specific ion channel FluC of Trichlorobacter lovleyi (strain ATCC BAA-1151 / DSM 17278 / SZ) (Geobacter lovleyi).